We begin with the raw amino-acid sequence, 34 residues long: Photosystem I reaction center subunit XII (34 aa).

A helical transmembrane segment spans residues 9 to 29 (LIILGLIVVMHAGVLALRLGI).

Belongs to the PsaM family.

The protein resides in the cellular thylakoid membrane. The protein is Photosystem I reaction center subunit XII of Prochlorococcus marinus subsp. pastoris (strain CCMP1986 / NIES-2087 / MED4).